The chain runs to 183 residues: Ribosome rescue factor SmrB (183 aa).

Residues 98–173 (LDLHGLTQLQ…GDAALLVLIE (76 aa)) form the Smr domain.

Belongs to the SmrB family. In terms of assembly, associates with collided ribosomes, but not with correctly translating polysomes.

Its function is as follows. Acts as a ribosome collision sensor. Detects stalled/collided disomes (pairs of ribosomes where the leading ribosome is stalled and a second ribosome has collided with it) and endonucleolytically cleaves mRNA at the 5' boundary of the stalled ribosome. Stalled/collided disomes form a new interface (primarily via the 30S subunits) that binds SmrB. Cleaved mRNA becomes available for tmRNA ligation, leading to ribosomal subunit dissociation and rescue of stalled ribosomes. The chain is Ribosome rescue factor SmrB from Shigella boydii serotype 18 (strain CDC 3083-94 / BS512).